A 183-amino-acid polypeptide reads, in one-letter code: Apo-citrate lyase phosphoribosyl-dephospho-CoA transferase (183 aa).

Belongs to the CitX family.

The enzyme catalyses apo-[citrate lyase ACP] + 2'-(5''-triphospho-alpha-D-ribosyl)-3'-dephospho-CoA = holo-[citrate lyase ACP] + diphosphate. Its function is as follows. Transfers 2-(5''-triphosphoribosyl)-3'-dephosphocoenzyme-A on a serine residue to the apo-acyl carrier protein (gamma chain) of the citrate lyase to yield holo-acyl carrier protein. This Shigella flexneri serotype 5b (strain 8401) protein is Apo-citrate lyase phosphoribosyl-dephospho-CoA transferase.